The following is a 138-amino-acid chain: Low molecular weight protein-tyrosine-phosphatase PtpB (138 aa).

The active-site Nucleophile is Cys-7. The active site involves Arg-13. Asp-111 serves as the catalytic Proton donor.

This sequence belongs to the low molecular weight phosphotyrosine protein phosphatase family.

The enzyme catalyses O-phospho-L-tyrosyl-[protein] + H2O = L-tyrosyl-[protein] + phosphate. In terms of biological role, dephosphorylates the phosphotyrosine-containing proteins. This chain is Low molecular weight protein-tyrosine-phosphatase PtpB (ptpB), found in Staphylococcus haemolyticus (strain JCSC1435).